A 549-amino-acid chain; its full sequence is Probable protein kinase UbiB (549 aa).

The Protein kinase domain occupies D123 to L501. ATP contacts are provided by residues L129–V137 and K152. D287 (proton acceptor) is an active-site residue. Transmembrane regions (helical) follow at residues H496 to I516 and A520 to W540.

The protein belongs to the ABC1 family. UbiB subfamily.

It localises to the cell inner membrane. It participates in cofactor biosynthesis; ubiquinone biosynthesis [regulation]. Functionally, is probably a protein kinase regulator of UbiI activity which is involved in aerobic coenzyme Q (ubiquinone) biosynthesis. The polypeptide is Probable protein kinase UbiB (Shewanella baltica (strain OS223)).